Reading from the N-terminus, the 296-residue chain is Fructose-bisphosphate aldolase class 1 (296 aa).

The Proton acceptor role is filled by Glu-175. Lys-212 serves as the catalytic Schiff-base intermediate with dihydroxyacetone-P.

Belongs to the class I fructose-bisphosphate aldolase family.

It carries out the reaction beta-D-fructose 1,6-bisphosphate = D-glyceraldehyde 3-phosphate + dihydroxyacetone phosphate. Its pathway is carbohydrate degradation; glycolysis; D-glyceraldehyde 3-phosphate and glycerone phosphate from D-glucose: step 4/4. The polypeptide is Fructose-bisphosphate aldolase class 1 (Staphylococcus aureus (strain bovine RF122 / ET3-1)).